We begin with the raw amino-acid sequence, 598 residues long: Elongation factor 4 (598 aa).

Residues 5–187 (ANIRNFSIIA…ALVEFIPAPT (183 aa)) form the tr-type G domain. GTP-binding positions include 17-22 (DHGKST) and 134-137 (NKID).

This sequence belongs to the TRAFAC class translation factor GTPase superfamily. Classic translation factor GTPase family. LepA subfamily.

Its subcellular location is the cell inner membrane. The enzyme catalyses GTP + H2O = GDP + phosphate + H(+). Its function is as follows. Required for accurate and efficient protein synthesis under certain stress conditions. May act as a fidelity factor of the translation reaction, by catalyzing a one-codon backward translocation of tRNAs on improperly translocated ribosomes. Back-translocation proceeds from a post-translocation (POST) complex to a pre-translocation (PRE) complex, thus giving elongation factor G a second chance to translocate the tRNAs correctly. Binds to ribosomes in a GTP-dependent manner. The chain is Elongation factor 4 from Psychrobacter cryohalolentis (strain ATCC BAA-1226 / DSM 17306 / VKM B-2378 / K5).